The following is an 887-amino-acid chain: Translation initiation factor IF-2 (887 aa).

A disordered region spans residues 1-291 (MTDQADTSER…RRRVERERKK (291 aa)). Over residues 58–117 (AAPAAAPAAAPAAAEEVAKKPVAAPEVKPAAPVEERPAPVAKAAPEVKAVPAPAPAAAPA) the composition is skewed to low complexity. Basic and acidic residues-rich tracts occupy residues 148–178 (SARE…EAER), 185–194 (AAEEASRHTA), 201–215 (RAAE…DDRP), and 267–276 (AFDDESERQR). A tr-type G domain is found at 385–553 (ARAPVVTVMG…TILLQAELLD (169 aa)). The segment at 394 to 401 (GHVDHGKT) is G1. 394–401 (GHVDHGKT) serves as a coordination point for GTP. The interval 419 to 423 (GITQH) is G2. Positions 441–444 (DTPG) are G3. GTP-binding positions include 441–445 (DTPGH) and 495–498 (NKMD). The interval 495–498 (NKMD) is G4. The G5 stretch occupies residues 531-533 (SAK).

The protein belongs to the TRAFAC class translation factor GTPase superfamily. Classic translation factor GTPase family. IF-2 subfamily.

It is found in the cytoplasm. Functionally, one of the essential components for the initiation of protein synthesis. Protects formylmethionyl-tRNA from spontaneous hydrolysis and promotes its binding to the 30S ribosomal subunits. Also involved in the hydrolysis of GTP during the formation of the 70S ribosomal complex. The protein is Translation initiation factor IF-2 of Parvibaculum lavamentivorans (strain DS-1 / DSM 13023 / NCIMB 13966).